The sequence spans 194 residues: Thymidylate kinase (194 aa).

7 to 14 lines the ATP pocket; it reads GVDGVGKS.

Belongs to the thymidylate kinase family.

It carries out the reaction dTMP + ATP = dTDP + ADP. Phosphorylation of dTMP to form dTDP in both de novo and salvage pathways of dTTP synthesis. The chain is Thymidylate kinase from Campylobacter curvus (strain 525.92).